The sequence spans 269 residues: Hydroxyethylthiazole kinase (269 aa).

Met41 provides a ligand contact to substrate. ATP is bound by residues Arg117 and Ser163. Residue Gly190 participates in substrate binding.

This sequence belongs to the Thz kinase family. It depends on Mg(2+) as a cofactor.

It catalyses the reaction 5-(2-hydroxyethyl)-4-methylthiazole + ATP = 4-methyl-5-(2-phosphooxyethyl)-thiazole + ADP + H(+). Its pathway is cofactor biosynthesis; thiamine diphosphate biosynthesis; 4-methyl-5-(2-phosphoethyl)-thiazole from 5-(2-hydroxyethyl)-4-methylthiazole: step 1/1. Its function is as follows. Catalyzes the phosphorylation of the hydroxyl group of 4-methyl-5-beta-hydroxyethylthiazole (THZ). The chain is Hydroxyethylthiazole kinase from Latilactobacillus sakei subsp. sakei (strain 23K) (Lactobacillus sakei subsp. sakei).